The following is a 298-amino-acid chain: Multifunctional dioxygenase ausE (298 aa).

Substrate-binding residues include Arg72 and Gln127. Positions 130 and 132 each coordinate Fe cation. Thr167 serves as a coordination point for substrate. Position 214 (His214) interacts with Fe cation. Arg226 contacts substrate.

This sequence belongs to the PhyH family. In terms of assembly, homodimer. Requires Fe cation as cofactor.

It catalyses the reaction preaustinoid A1 + 2-oxoglutarate + O2 = preaustinoid A2 + succinate + CO2 + H2O. The enzyme catalyses preaustinoid A2 + 2-oxoglutarate + O2 = preaustinoid A3 + succinate + CO2 + H2O. It carries out the reaction berkeleyone A + 2-oxoglutarate + O2 = preaustinoid A + succinate + CO2 + H2O. It participates in secondary metabolite biosynthesis; terpenoid biosynthesis. Multifunctional dioxygenase; part of the gene cluster that mediates the biosynthesis of calidodehydroaustin, a fungal meroterpenoid. The first step of the pathway is the synthesis of 3,5-dimethylorsellinic acid by the polyketide synthase ausA. 3,5-dimethylorsellinic acid is then prenylated by the polyprenyl transferase ausN. Further epoxidation by the FAD-dependent monooxygenase ausM and cyclization by the probable terpene cyclase ausL lead to the formation of protoaustinoid A. Protoaustinoid A is then oxidized to spiro-lactone preaustinoid A3 by the combined action of the FAD-binding monooxygenases ausB and ausC, and the dioxygenase ausE. Acid-catalyzed keto-rearrangement and ring contraction of the tetraketide portion of preaustinoid A3 by ausJ lead to the formation of preaustinoid A4. The aldo-keto reductase ausK, with the help of ausH, is involved in the next step by transforming preaustinoid A4 into isoaustinone which is in turn hydroxylated by the P450 monooxygenase ausI to form austinolide. The cytochrome P450 monooxygenase ausG modifies austinolide to austinol. Austinol is further acetylated to austin by the O-acetyltransferase ausP, which spontaneously changes to dehydroaustin. The cytochrome P450 monooxygenase ausR then converts dehydroaustin is into 7-dehydrodehydroaustin. The hydroxylation catalyzed by ausR permits the O-acetyltransferase ausQ to add an additional acetyl group to the molecule, leading to the formation of acetoxydehydroaustin. The short chain dehydrogenase ausT catalyzes the reduction of the double bond present between carbon atoms 1 and 2 to convert 7-dehydrodehydroaustin into 1,2-dihydro-7-hydroxydehydroaustin. AusQ catalyzes not only an acetylation reaction but also the addition of the PKS ausV diketide product to 1,2-dihydro-7-hydroxydehydroaustin, forming precalidodehydroaustin. Finally, the iron/alpha-ketoglutarate-dependent dioxygenase converts precalidodehydroaustin into calidodehydroaustin. This is Multifunctional dioxygenase ausE from Aspergillus calidoustus.